Reading from the N-terminus, the 372-residue chain is 4-hydroxy-3-methylbut-2-en-1-yl diphosphate synthase (flavodoxin) (372 aa).

Positions 270, 273, 305, and 312 each coordinate [4Fe-4S] cluster.

The protein belongs to the IspG family. It depends on [4Fe-4S] cluster as a cofactor.

It catalyses the reaction (2E)-4-hydroxy-3-methylbut-2-enyl diphosphate + oxidized [flavodoxin] + H2O + 2 H(+) = 2-C-methyl-D-erythritol 2,4-cyclic diphosphate + reduced [flavodoxin]. Its pathway is isoprenoid biosynthesis; isopentenyl diphosphate biosynthesis via DXP pathway; isopentenyl diphosphate from 1-deoxy-D-xylulose 5-phosphate: step 5/6. Converts 2C-methyl-D-erythritol 2,4-cyclodiphosphate (ME-2,4cPP) into 1-hydroxy-2-methyl-2-(E)-butenyl 4-diphosphate. The chain is 4-hydroxy-3-methylbut-2-en-1-yl diphosphate synthase (flavodoxin) from Salmonella choleraesuis (strain SC-B67).